We begin with the raw amino-acid sequence, 804 residues long: MFVSYKWLEDYVDLKGMDPAVLAEKITRAGIEVEGIEYKGEGIKGVVIGHVLEREQHPNADKLNKCLVDIGAEAPVQIICGAPNVDKGQKVAVATVGAVLPGNFKIKKAKLRGEESNGMICSLQELGIESKLVAKEYAEGIFVFPNDAETGSDALAALQLDDAILELGLTPNRADAMNMLGVAYEVAAILDTEVKLPQTDYPAASEQASDYISVKIEDQEANPLYTAKIIKNVTIAPSPLWMQTKLMNAGIRPHNNVVDITNFVLLEYGQPLHAFDYDRFGSKEVVVRKAAENEMIVTLDDQERKLSADHLVITNGTKAQAVAGVMGGAESEVQEDTKTILLEAAYFNGQKVRKASKDLGLRSESSVRFEKGIDPARVRLAAERAAQLIHLYAGGEVLAGTVEEDHLTIEANNIHVSADKVSSVLGLTISKEELISIYKRLGFTVGEADDLLVVTVPSRRGDITIEEDLIEEAARLYGYDNIPSTLPETAGTTGGLTPYQAKRRKVRRFLEGAGLSQAITYSLTNEKKATAFAIEKSLNTVLALPMSEERSILRHSLVPNLLDSVSYNLARQTDSVALYEVGSVFLTKEEDTKPVETERVAGAVTGLWRKQLWQGEKKPVDFFVVKGIVEGLLDKLNVLDSIEFVQSERKQLHPGRTANILLNGSLIGFIGQVHPSLEKELDIKETYVFELDLHALLAAETAPLVYTAIPKYPSVTRDIALVTDKTVTSGQLESVIKEAGGKLLKEVTVFDVYEGEHMEEGKKSVAFSLQYVNPEQTLTEEEVTKAHSKVLKALEDTYQAVLRG.

The tRNA-binding domain maps to 40 to 155 (GEGIKGVVIG…NDAETGSDAL (116 aa)). A B5 domain is found at 409–484 (IEANNIHVSA…RLYGYDNIPS (76 aa)). Asp-462, Asp-468, Glu-471, and Glu-472 together coordinate Mg(2+). Positions 710–803 (PKYPSVTRDI…LEDTYQAVLR (94 aa)) constitute an FDX-ACB domain.

The protein belongs to the phenylalanyl-tRNA synthetase beta subunit family. Type 1 subfamily. In terms of assembly, tetramer of two alpha and two beta subunits. It depends on Mg(2+) as a cofactor.

Its subcellular location is the cytoplasm. The enzyme catalyses tRNA(Phe) + L-phenylalanine + ATP = L-phenylalanyl-tRNA(Phe) + AMP + diphosphate + H(+). This is Phenylalanine--tRNA ligase beta subunit (pheT) from Bacillus subtilis (strain 168).